A 55-amino-acid chain; its full sequence is Myrmicitoxin(1)-Pr6b (55 aa).

The signal sequence occupies residues 1 to 22; it reads MKIIYAFLLIAVVAFMGSGIMA. A propeptide spanning residues 23–29 is cleaved from the precursor; that stretch reads ESLAEAI.

Belongs to the formicidae venom clade 4 family. Expressed by the venom gland.

It is found in the secreted. Functionally, probable neurotoxin. This Pogonomyrmex rugosus (Desert harvester ant) protein is Myrmicitoxin(1)-Pr6b.